Here is a 240-residue protein sequence, read N- to C-terminus: Acyl-protein thioesterase 1 (240 aa).

Catalysis depends on charge relay system residues Ser129, Asp183, and His219.

The protein belongs to the AB hydrolase superfamily. AB hydrolase 2 family.

The protein resides in the cytoplasm. Its subcellular location is the nucleus. It catalyses the reaction S-hexadecanoyl-L-cysteinyl-[protein] + H2O = L-cysteinyl-[protein] + hexadecanoate + H(+). Its function is as follows. Hydrolyzes fatty acids from S-acylated cysteine residues in proteins with a strong preference for palmitoylated G-alpha proteins over other acyl substrates. Mediates the deacylation of G-alpha proteins such as GPA1 in vivo, but has weak or no activity toward palmitoylated Ras proteins. Has weak lysophospholipase activity in vitro; however such activity may not exist in vivo. The polypeptide is Acyl-protein thioesterase 1 (Mycosarcoma maydis (Corn smut fungus)).